Here is a 230-residue protein sequence, read N- to C-terminus: Large ribosomal subunit protein uL1 (230 aa).

It belongs to the universal ribosomal protein uL1 family. Part of the 50S ribosomal subunit.

Its function is as follows. Binds directly to 23S rRNA. The L1 stalk is quite mobile in the ribosome, and is involved in E site tRNA release. In terms of biological role, protein L1 is also a translational repressor protein, it controls the translation of the L11 operon by binding to its mRNA. The polypeptide is Large ribosomal subunit protein uL1 (Sulfurimonas denitrificans (strain ATCC 33889 / DSM 1251) (Thiomicrospira denitrificans (strain ATCC 33889 / DSM 1251))).